Consider the following 71-residue polypeptide: DNA gyrase inhibitor YacG (71 aa).

The Zn(2+) site is built by C7, C10, C26, and C30.

Belongs to the DNA gyrase inhibitor YacG family. Interacts with GyrB. The cofactor is Zn(2+).

Its function is as follows. Inhibits all the catalytic activities of DNA gyrase by preventing its interaction with DNA. Acts by binding directly to the C-terminal domain of GyrB, which probably disrupts DNA binding by the gyrase. This chain is DNA gyrase inhibitor YacG, found in Shewanella amazonensis (strain ATCC BAA-1098 / SB2B).